The chain runs to 404 residues: MMLNLDAIRAQFPALQQIVNGNPLVYLDSAATTQKPQCVIDAISHYYSQHNANVHRGSHSLTAQATSQFEGAREQVAQFIGAPSSKNIIWTRGATEALNLIAQSYARSTLQAGDEILVSETEHHANIVPWQMVAEQTGAKVVKIPMTTTGEFGLAAFRQLLSPRCKIVALAHITNVTGTRQPIEAVIQAAHQQGAIVVIDGAQGIVHETVDVRALDADFYVFSGHKLYAPAGIGVLYGKTALLEAMPPWHGGGKMVEKVSFDGTTFTGLPGKFEAGTPNVAGAIALATAIDWYQSLDRAAVEAHLHQLQQQAYQAISQIDDIRVLGYQPNASVLSLVMDGVHHQDLATLLDQQGIAVRAGHHCAHPLMDAFGVKGTVRISFGVYNSAEEVERLIAAIHKAVDLL.

Lys-226 bears the N6-(pyridoxal phosphate)lysine mark. Residue Cys-363 is the Cysteine persulfide intermediate of the active site.

The protein belongs to the class-V pyridoxal-phosphate-dependent aminotransferase family. Csd subfamily. Requires pyridoxal 5'-phosphate as cofactor.

It catalyses the reaction (sulfur carrier)-H + L-cysteine = (sulfur carrier)-SH + L-alanine. Catalyzes the removal of elemental sulfur and selenium atoms from L-cysteine, L-cystine, L-selenocysteine, and L-selenocystine to produce L-alanine. This is Probable cysteine desulfurase (csd) from Vibrio cholerae serotype O1 (strain ATCC 39315 / El Tor Inaba N16961).